The chain runs to 248 residues: Coproheme decarboxylase (248 aa).

Residues Arg-130, Tyr-144 to Lys-148, His-171, Gln-184, and Ser-222 contribute to the Fe-coproporphyrin III site. Tyr-144 is an active-site residue.

It belongs to the ChdC family. Type 1 subfamily. Requires Fe-coproporphyrin III as cofactor.

It catalyses the reaction Fe-coproporphyrin III + 2 H2O2 + 2 H(+) = heme b + 2 CO2 + 4 H2O. It carries out the reaction Fe-coproporphyrin III + H2O2 + H(+) = harderoheme III + CO2 + 2 H2O. The enzyme catalyses harderoheme III + H2O2 + H(+) = heme b + CO2 + 2 H2O. It participates in porphyrin-containing compound metabolism; protoheme biosynthesis. In terms of biological role, involved in coproporphyrin-dependent heme b biosynthesis. Catalyzes the decarboxylation of Fe-coproporphyrin III (coproheme) to heme b (protoheme IX), the last step of the pathway. The reaction occurs in a stepwise manner with a three-propionate intermediate. The polypeptide is Coproheme decarboxylase (Geobacillus sp. (strain WCH70)).